The following is a 228-amino-acid chain: Biosynthetic peptidoglycan transglycosylase (228 aa).

A helical membrane pass occupies residues 8–28 (GVAALLALFLLYQLWIFGHIV).

The protein belongs to the glycosyltransferase 51 family.

It is found in the cell inner membrane. The catalysed reaction is [GlcNAc-(1-&gt;4)-Mur2Ac(oyl-L-Ala-gamma-D-Glu-L-Lys-D-Ala-D-Ala)](n)-di-trans,octa-cis-undecaprenyl diphosphate + beta-D-GlcNAc-(1-&gt;4)-Mur2Ac(oyl-L-Ala-gamma-D-Glu-L-Lys-D-Ala-D-Ala)-di-trans,octa-cis-undecaprenyl diphosphate = [GlcNAc-(1-&gt;4)-Mur2Ac(oyl-L-Ala-gamma-D-Glu-L-Lys-D-Ala-D-Ala)](n+1)-di-trans,octa-cis-undecaprenyl diphosphate + di-trans,octa-cis-undecaprenyl diphosphate + H(+). It functions in the pathway cell wall biogenesis; peptidoglycan biosynthesis. Functionally, peptidoglycan polymerase that catalyzes glycan chain elongation from lipid-linked precursors. The sequence is that of Biosynthetic peptidoglycan transglycosylase from Laribacter hongkongensis (strain HLHK9).